The chain runs to 468 residues: Acetyl-CoA decarbonylase/synthase complex subunit gamma 1 (468 aa).

The region spanning 1-61 (MKINSPLEAY…YAKKLAELDR (61 aa)) is the 4Fe-4S domain. Cys18, Cys21, Cys26, and Cys43 together coordinate [4Fe-4S] cluster.

Heterodimer of delta and gamma chains. The ACDS complex is made up of alpha, epsilon, beta, gamma and delta chains with a probable stoichiometry of (alpha(2)epsilon(2))(4)-beta(8)-(gamma(1)delta(1))(8). Corrinoid is required as a cofactor. Requires [4Fe-4S] cluster as cofactor.

It carries out the reaction 5,6,7,8-tetrahydrosarcinapterin + methyl-Co(III)-[corrinoid Fe-S protein] = 5-methyltetrahydrosarcinapterin + Co(I)-[corrinoid Fe-S protein] + H(+). It participates in one-carbon metabolism; methanogenesis from acetate. Functionally, part of a complex that catalyzes the reversible cleavage of acetyl-CoA, allowing growth on acetate as sole source of carbon and energy. The protein is Acetyl-CoA decarbonylase/synthase complex subunit gamma 1 of Methanosarcina thermophila.